Here is a 90-residue protein sequence, read N- to C-terminus: Putative transcript Y 12 protein (90 aa).

This Homo sapiens (Human) protein is Putative transcript Y 12 protein (TTTY12).